A 935-amino-acid polypeptide reads, in one-letter code: Progesterone receptor (935 aa).

Residues 1–164 (MTELKAKGPR…PATQGVLSPL (164 aa)) form an AF3; mediates transcriptional activation region. The tract at residues 1 to 254 (MTELKAKGPR…GGAAAGGGAA (254 aa)) is disordered. Residues 1 to 568 (MTELKAKGPR…YSFESLPQKI (568 aa)) are modulating, Pro-Rich. S20 is modified (phosphoserine). Residues 55–59 (LDGLL) carry the LXXL motif 1 motif. S81 carries the phosphoserine modification. The LXXL motif 2 motif lies at 115 to 119 (LDTLL). 2 positions are modified to phosphoserine: S130 and S162. A mediates transcriptional transrepression region spans residues 165–305 (MSRSGGKAGD…LATTVMDFIH (141 aa)). The short motif at 183–187 (KVLPR) is the Nuclear localization signal element. Residues S190 and S213 each carry the phosphoserine modification. Residues 220–231 (EVEEEDGSESED) are compositionally biased toward acidic residues. Residues 232–246 (SAGPLLKGKPRALGG) are compositionally biased toward low complexity. A Phosphoserine; by MAPK1 modification is found at S294. The interval 331 to 378 (GGAGAASAFAPPRSSPSASSTPVAVGDFPDCAYPPDAEPKDDAYPLYS) is disordered. Residues 335-350 (AASAFAPPRSSPSASS) are compositionally biased toward low complexity. The residue at position 345 (S345) is a Phosphoserine; by MAPK. A Glycyl lysine isopeptide (Lys-Gly) (interchain with G-Cter in SUMO); alternate cross-link involves residue K388. A Glycyl lysine isopeptide (Lys-Gly) (interchain with G-Cter in ubiquitin); alternate cross-link involves residue K388. The residue at position 400 (S400) is a Phosphoserine; by CDK2. A compositionally biased stretch (pro residues) spans 418-430 (PLGPPPPLPPRAP). Positions 418–438 (PLGPPPPLPPRAPPTRAGEAA) are disordered. The segment at 456-548 (STLECILYKA…VYPPYLNYLR (93 aa)) is AF1; mediates transcriptional activation. K533 is covalently cross-linked (Glycyl lysine isopeptide (Lys-Gly) (interchain with G-Cter in SUMO)). 2 NR C4-type zinc fingers span residues 569–589 (CLIC…CGSC) and 605–629 (CAGR…LRKC). Positions 569-641 (CLICGDEASG…AGMVLGGRKF (73 aa)) form a DNA-binding region, nuclear receptor. Phosphoserine is present on S678. The region spanning 681-915 (QDIQLIPPLI…EFPEMMSEVI (235 aa)) is the NR LBD domain. An AF2; mediates transcriptional activation region spans residues 689–935 (LINLLMSIEP…MVKPLLFHKK (247 aa)).

This sequence belongs to the nuclear hormone receptor family. Interacts with SMARD1 and UNC45A. Interacts with CUEDC2; the interaction promotes ubiquitination, decreases sumoylation, and represses transcriptional activity. Interacts with PIAS3; the interaction promotes sumoylation of PR in a hormone-dependent manner, inhibits DNA-binding, and alters nuclear export. Interacts with SP1; the interaction requires ligand-induced phosphorylation on Ser-345 by ERK1/2-MAPK. Interacts with PRMT2. Interacts with NCOA2 and NCOA1. Interacts with KLF9. Interacts with GTF2B. Phosphorylated on multiple serine sites. Several of these sites are hormone-dependent. Phosphorylation on Ser-294 is highly hormone-dependent and modulates ubiquitination and sumoylation on Lys-388. Phosphorylation on Ser-102 and Ser-345 also requires induction by hormone. Basal phosphorylation on Ser-81, Ser-162, Ser-190 and Ser-400 is increased in response to progesterone and can be phosphorylated in vitro by the CDK2-A1 complex. Increased levels of phosphorylation on Ser-400 also in the presence of EGF, heregulin, IGF, PMA and FBS. Phosphorylation at this site by CDK2 is ligand-independent, and increases nuclear translocation and transcriptional activity. Phosphorylation at Ser-162 and Ser-294, but not at Ser-190, is impaired during the G(2)/M phase of the cell cycle. Phosphorylation on Ser-345 by ERK1/2 MAPK is required for interaction with SP1. In terms of processing, sumoylation is hormone-dependent and represses transcriptional activity. Sumoylation on all three sites is enhanced by PIAS3. Desumoylated by SENP1. Sumoylation on Lys-388, the main site of sumoylation, is repressed by ubiquitination on the same site, and modulated by phosphorylation at Ser-294. Post-translationally, ubiquitination is hormone-dependent and represses sumoylation on the same site. Promoted by MAPK-mediated phosphorylation on Ser-294. Palmitoylated by ZDHHC7 and ZDHHC21. Palmitoylation is required for plasma membrane targeting and for rapid intracellular signaling via ERK and AKT kinases and cAMP generation.

It is found in the nucleus. Its subcellular location is the cytoplasm. In terms of biological role, the steroid hormones and their receptors are involved in the regulation of eukaryotic gene expression and affect cellular proliferation and differentiation in target tissues. Transcriptional activator of several progesteron-dependent promoters in a variety of cell types. Involved in activation of SRC-dependent MAPK signaling on hormone stimulation. The chain is Progesterone receptor (PGR) from Pongo pygmaeus (Bornean orangutan).